The sequence spans 394 residues: MSFDEIKTHNKKAIIGIFMIFSLRVFGMFMIVPVLSTYGMCLKNSNIFLVGVAIGIYGIFQIIFQIPYGWLSDKYGQKLIINIGLLCFLLGNIIAWSSNSIWGIILGRGLQGSGAISSVCMTLLSELVLPHNRIKIMGLLGVSFGISFFLAVILSPIIVNMFGFYCLFLINSLLSIFCLFFGMFYIPASLLNKNVVCNFRSEISNFFKILSNRVLCQINLSVFLIHFFLMCNFIIIPVELKKIFEFFEYVPEIIYIVILLVSFLIVLFCICFIQSKVLYSNITITTSAFLFVLCYGIFLLFGHNNISLILGLQIFFIAFIFLETILPALVNKFSSKNYKSTTMAIYSTSQFLGSSMGGIIGGILFSYLNYFEVLFFEFVVSILWFITSILYLIK.

12 helical membrane passes run 13–35 (AIIG…VPVL), 50–72 (VGVA…GWLS), 79–97 (LIIN…IAWS), 107–129 (GRGL…ELVL), 136–158 (IMGL…SPII), 168–190 (FLIN…PASL), 218–240 (INLS…PVEL), 250–272 (VPEI…CICF), 277–299 (VLYS…GIFL), 309–331 (ILGL…ALVN), 344–366 (AIYS…ILFS), and 371–393 (FEVL…LYLI).

This sequence belongs to the major facilitator superfamily.

It is found in the cell membrane. This is an uncharacterized protein from Buchnera aphidicola subsp. Baizongia pistaciae (strain Bp).